Reading from the N-terminus, the 320-residue chain is o-succinylbenzoate synthase (320 aa).

Residue Lys-133 is the Proton donor of the active site. Residues Asp-161, Glu-190, and Asp-213 each coordinate Mg(2+). Lys-235 functions as the Proton acceptor in the catalytic mechanism.

It belongs to the mandelate racemase/muconate lactonizing enzyme family. MenC type 1 subfamily. A divalent metal cation is required as a cofactor.

The catalysed reaction is (1R,6R)-6-hydroxy-2-succinyl-cyclohexa-2,4-diene-1-carboxylate = 2-succinylbenzoate + H2O. The protein operates within quinol/quinone metabolism; 1,4-dihydroxy-2-naphthoate biosynthesis; 1,4-dihydroxy-2-naphthoate from chorismate: step 4/7. It participates in quinol/quinone metabolism; menaquinone biosynthesis. Functionally, converts 2-succinyl-6-hydroxy-2,4-cyclohexadiene-1-carboxylate (SHCHC) to 2-succinylbenzoate (OSB). The protein is o-succinylbenzoate synthase of Escherichia coli O6:K15:H31 (strain 536 / UPEC).